The following is a 394-amino-acid chain: Elongation factor Tu (394 aa).

The tr-type G domain occupies 10 to 204 (KPHINVGTIG…ALDNYIPEPK (195 aa)). A G1 region spans residues 19–26 (GHVDHGKT). 19 to 26 (GHVDHGKT) serves as a coordination point for GTP. Threonine 26 lines the Mg(2+) pocket. Residues 60–64 (GITIN) are G2. The interval 81–84 (DCPG) is G3. Residues 81–85 (DCPGH) and 136–139 (NKCD) contribute to the GTP site. Residues 136-139 (NKCD) are G4. The interval 174–176 (SAL) is G5.

This sequence belongs to the TRAFAC class translation factor GTPase superfamily. Classic translation factor GTPase family. EF-Tu/EF-1A subfamily. Monomer.

It localises to the cytoplasm. The catalysed reaction is GTP + H2O = GDP + phosphate + H(+). In terms of biological role, GTP hydrolase that promotes the GTP-dependent binding of aminoacyl-tRNA to the A-site of ribosomes during protein biosynthesis. This Blochmanniella pennsylvanica (strain BPEN) protein is Elongation factor Tu.